A 178-amino-acid polypeptide reads, in one-letter code: PRA1 family protein 2 (178 aa).

The Cytoplasmic portion of the chain corresponds to 1–41 (MSEVRLPPLRALDDFVLGSARLVAPDPCDPQRWCHRVINNL). Residues 42-62 (LYYQTNYLICFGLGLALAGYV) form a helical membrane-spanning segment. Residues 63-64 (RP) lie on the Extracellular side of the membrane. The helical transmembrane segment at 65 to 85 (LHTLLSALVVAVALGMLVCAA) threads the bilayer. At 86–96 (ENRAAVRRCRR) the chain is on the cytoplasmic side. A helical membrane pass occupies residues 97-119 (SHPAACLAAVLAVGFLVLWAAGG). Topologically, residues 120 to 122 (AGT) are extracellular. Residues 123 to 140 (FLLSIAGPVLLILVHASL) form a helical membrane-spanning segment. The Cytoplasmic portion of the chain corresponds to 141 to 178 (RLRNLKNKIENKIESIGLKRTPMGLLLEALGQEQEAGS).

It belongs to the PRA1 family. In terms of assembly, interacts with CCR5 and GDE1.

The protein resides in the endosome membrane. Its function is as follows. May be involved in ER/Golgi transport and vesicular traffic. Plays a proapoptotic role in cerulenin-induced neuroblastoma apoptosis. This is PRA1 family protein 2 (PRAF2) from Bos taurus (Bovine).